Consider the following 647-residue polypeptide: Pumilio homolog 3 (647 aa).

Over residues 1–10 the composition is skewed to basic residues; the sequence is MEVKGKKKFT. Residues 1–123 form a disordered region; sequence MEVKGKKKFT…KKKKELKQSR (123 aa). Residue K33 is modified to N6-acetyllysine. Positions 59-68 are enriched in basic residues; sequence PGKKGVKQFK. Positions 102 to 123 are enriched in basic and acidic residues; it reads SGAKKPKWDDFKKKKKELKQSR. The Nuclear localization signal motif lies at 105-117; it reads KKPKWDDFKKKKK. In terms of domain architecture, PUM-HD spans 142-509; it reads ESLRRKDCDK…VVLDKSACVL (368 aa). Pumilio repeat units lie at residues 176 to 211, 212 to 247, 248 to 276, 288 to 324, 325 to 360, 361 to 396, 397 to 434, 435 to 503, 504 to 550, 551 to 595, and 596 to 635; these read HDST…LSKA, KYSR…MLRH, SEAS…ELYG, PTLD…VIKH, SLVH…LAHT, HDGA…VANG, QYSH…IVND, KYGR…VVLD, KSAC…VAEH, PAGH…WASI, and NRGA…KSSS.

As to quaternary structure, interacts with PARP1 (via catalytic domain). In terms of tissue distribution, in the adult eye, expressed primarily in retinal ganglion cells and, to a lesser extent, in the pigmented cells.

The protein resides in the nucleus. The protein localises to the nucleolus. It is found in the nucleoplasm. It localises to the chromosome. Inhibits the poly(ADP-ribosyl)ation activity of PARP1 and the degradation of PARP1 by CASP3 following genotoxic stress. Binds to double-stranded RNA or DNA without sequence specificity. Involved in development of the eye and of primordial germ cells. The protein is Pumilio homolog 3 of Mus musculus (Mouse).